Consider the following 433-residue polypeptide: Glutamate-rich protein 2 (433 aa).

5 disordered regions span residues 56 to 86 (VPAA…LAPP), 113 to 161 (DSAS…KHPQ), 189 to 273 (SRQN…SIET), 308 to 344 (CLED…TRAP), and 394 to 433 (EKAQ…EDGS). Pro residues predominate over residues 63–85 (PAPPPPRALRPAPGPPRSAPLAP). Residues 114-127 (SASQARGSEPSSSA) show a composition bias toward polar residues. Composition is skewed to basic and acidic residues over residues 199-214 (DPKE…EKPQ) and 244-258 (ARKE…DKVS). Residues 259–273 (LKSSENRPSSRSIET) are compositionally biased toward polar residues. Acidic residues-rich tracts occupy residues 308-334 (CLED…EDDE) and 397-433 (QEEE…EDGS).

The chain is Glutamate-rich protein 2 (Erich2) from Rattus norvegicus (Rat).